We begin with the raw amino-acid sequence, 185 residues long: Ribosome maturation factor RimM (185 aa).

A PRC barrel domain is found at 96–171 (EDEFYHSDLL…VITIDPPEDV (76 aa)). Residues 165–185 (IDPPEDVGSKAEEEGGGAPDD) form a disordered region.

Belongs to the RimM family. Binds ribosomal protein uS19.

The protein localises to the cytoplasm. Its function is as follows. An accessory protein needed during the final step in the assembly of 30S ribosomal subunit, possibly for assembly of the head region. Essential for efficient processing of 16S rRNA. May be needed both before and after RbfA during the maturation of 16S rRNA. It has affinity for free ribosomal 30S subunits but not for 70S ribosomes. This is Ribosome maturation factor RimM from Maricaulis maris (strain MCS10) (Caulobacter maris).